We begin with the raw amino-acid sequence, 491 residues long: Sterol 14-alpha demethylase (491 aa).

A helical transmembrane segment spans residues 20 to 40 (LWMLSTVALLSILVVSVVINV). Cys430 is a heme binding site.

It belongs to the cytochrome P450 family. The cofactor is heme.

It localises to the endoplasmic reticulum membrane. It carries out the reaction a 14alpha-methyl steroid + 3 reduced [NADPH--hemoprotein reductase] + 3 O2 = a Delta(14) steroid + formate + 3 oxidized [NADPH--hemoprotein reductase] + 4 H2O + 4 H(+). The enzyme catalyses a 14alpha-methyl steroid + reduced [NADPH--hemoprotein reductase] + O2 = a 14alpha-hydroxymethyl steroid + oxidized [NADPH--hemoprotein reductase] + H2O + H(+). The catalysed reaction is a 14alpha-hydroxymethyl steroid + reduced [NADPH--hemoprotein reductase] + O2 = a 14alpha-formyl steroid + oxidized [NADPH--hemoprotein reductase] + 2 H2O + H(+). It catalyses the reaction a 14alpha-formyl steroid + reduced [NADPH--hemoprotein reductase] + O2 = a Delta(14) steroid + formate + oxidized [NADPH--hemoprotein reductase] + H2O + 2 H(+). It carries out the reaction lanosterol + 3 reduced [NADPH--hemoprotein reductase] + 3 O2 = 4,4-dimethyl-5alpha-cholesta-8,14,24-trien-3beta-ol + formate + 3 oxidized [NADPH--hemoprotein reductase] + 4 H2O + 4 H(+). The enzyme catalyses lanosterol + reduced [NADPH--hemoprotein reductase] + O2 = 32-hydroxylanosterol + oxidized [NADPH--hemoprotein reductase] + H2O + H(+). The catalysed reaction is 32-hydroxylanosterol + reduced [NADPH--hemoprotein reductase] + O2 = 32-oxolanosterol + oxidized [NADPH--hemoprotein reductase] + 2 H2O + H(+). It catalyses the reaction 32-oxolanosterol + reduced [NADPH--hemoprotein reductase] + O2 = 4,4-dimethyl-5alpha-cholesta-8,14,24-trien-3beta-ol + formate + oxidized [NADPH--hemoprotein reductase] + H2O + 2 H(+). It carries out the reaction eburicol + 3 reduced [NADPH--hemoprotein reductase] + 3 O2 = 14-demethyleburicol + formate + 3 oxidized [NADPH--hemoprotein reductase] + 4 H2O + 4 H(+). The enzyme catalyses eburicol + reduced [NADPH--hemoprotein reductase] + O2 = 32-hydroxyeburicol + oxidized [NADPH--hemoprotein reductase] + H2O + H(+). The catalysed reaction is 32-hydroxyeburicol + reduced [NADPH--hemoprotein reductase] + O2 = 32-oxoeburicol + oxidized [NADPH--hemoprotein reductase] + 2 H2O + H(+). It catalyses the reaction 32-oxoeburicol + reduced [NADPH--hemoprotein reductase] + O2 = 14-demethyleburicol + formate + oxidized [NADPH--hemoprotein reductase] + H2O + 2 H(+). It participates in steroid biosynthesis; sterol biosynthesis. Functionally, sterol 14alpha-demethylase, encoded by cyp51A, cyp51B and cyp51C, that plays a critical role in the third module of ergosterol biosynthesis pathway, being ergosterol the major sterol component in fungal membranes that participates in a variety of functions. The third module or late pathway involves the ergosterol synthesis itself through consecutive reactions that mainly occur in the endoplasmic reticulum (ER) membrane. In filamentous fungi, during the initial step of this module, lanosterol (lanosta-8,24-dien-3beta-ol) can be metabolized to eburicol. Sterol 14alpha-demethylase catalyzes the three-step oxidative removal of the 14alpha-methyl group (C-32) of both these sterols in the form of formate, and converts eburicol and lanosterol to 14-demethyleburicol (4,4,24-trimethylergosta-8,14,24(28)-trienol) and 4,4-dimethyl-5alpha-cholesta-8,14,24-trien-3beta-ol, respectively, which are further metabolized by other enzymes in the pathway to ergosterol. Can also use substrates not intrinsic to fungi, such as 24,25-dihydrolanosterol (DHL), producing 4,4'-dimethyl-8,14-cholestadien-3-beta-ol, but at lower rates than the endogenous substrates. As a target of azole drugs, plays a crucial role in azole susceptibility. The sequence is that of Sterol 14-alpha demethylase from Aspergillus flavus (strain ATCC 200026 / FGSC A1120 / IAM 13836 / NRRL 3357 / JCM 12722 / SRRC 167).